A 246-amino-acid polypeptide reads, in one-letter code: Biosynthetic peptidoglycan transglycosylase (246 aa).

The chain crosses the membrane as a helical span at residues 27–47; it reads VVFCFFFAVFALLLIFRFVPI.

The protein belongs to the glycosyltransferase 51 family.

It is found in the cell inner membrane. The catalysed reaction is [GlcNAc-(1-&gt;4)-Mur2Ac(oyl-L-Ala-gamma-D-Glu-L-Lys-D-Ala-D-Ala)](n)-di-trans,octa-cis-undecaprenyl diphosphate + beta-D-GlcNAc-(1-&gt;4)-Mur2Ac(oyl-L-Ala-gamma-D-Glu-L-Lys-D-Ala-D-Ala)-di-trans,octa-cis-undecaprenyl diphosphate = [GlcNAc-(1-&gt;4)-Mur2Ac(oyl-L-Ala-gamma-D-Glu-L-Lys-D-Ala-D-Ala)](n+1)-di-trans,octa-cis-undecaprenyl diphosphate + di-trans,octa-cis-undecaprenyl diphosphate + H(+). The protein operates within cell wall biogenesis; peptidoglycan biosynthesis. Its function is as follows. Peptidoglycan polymerase that catalyzes glycan chain elongation from lipid-linked precursors. This Haemophilus influenzae (strain ATCC 51907 / DSM 11121 / KW20 / Rd) protein is Biosynthetic peptidoglycan transglycosylase.